The primary structure comprises 160 residues: uncharacterized protein (160 aa).

This is an uncharacterized protein from Gracula (BFDV).